The following is a 289-amino-acid chain: Probable aquaporin PIP2-6 (289 aa).

At methionine 1 the chain carries N-acetylmethionine. Over 1 to 38 (MTKDELTEEESLSGKDYLDPPPVKTFEVRELKKWSFYR) the chain is Cytoplasmic. Threonine 7 carries the phosphothreonine modification. Serine 11 carries the post-translational modification Phosphoserine. The helical transmembrane segment at 39–59 (AVIAEFIATLLFLYVTVLTVI) threads the bilayer. Residues 60-80 (GFKSQTDINAGGGACASVGLL) lie on the Extracellular side of the membrane. A helical transmembrane segment spans residues 81-101 (GISWAFGGMIFILVYCTAGIS). Over 102–124 (GGHINPAVTFGLFLASKVSLVRA) the chain is Cytoplasmic. The NPA 1 signature appears at 106 to 108 (NPA). The helical transmembrane segment at 125–145 (VSYMVAQCLGATCGVGLVKVF) threads the bilayer. Over 146 to 165 (QSTYYNRYGGGANMLSDGYN) the chain is Extracellular. A helical transmembrane segment spans residues 166–186 (VGVGVGAEIIGTFVLVYTVFS). Residues 187–200 (ATDPKRNARDSHIP) are Cytoplasmic-facing. The chain crosses the membrane as a helical span at residues 201 to 221 (VLAPLPIGFSVFMVHLATIPI). Over 222-248 (TGTGINPARSFGAAVIYNNQKAWDDQW) the chain is Extracellular. Residues 227-229 (NPA) carry the NPA 2 motif. The helical transmembrane segment at 249-269 (IFWVGPFVGAAIAAFYHQFVL) threads the bilayer. Topologically, residues 270-289 (RAGAMKAYGSVRSQLHELHA) are cytoplasmic. Phosphoserine occurs at positions 279 and 282.

This sequence belongs to the MIP/aquaporin (TC 1.A.8) family. PIP (TC 1.A.8.11) subfamily. Expressed above ground, and in flower buds.

It localises to the cell membrane. Aquaporins facilitate the transport of water and small neutral solutes across cell membranes. This Arabidopsis thaliana (Mouse-ear cress) protein is Probable aquaporin PIP2-6 (PIP2-6).